A 467-amino-acid polypeptide reads, in one-letter code: H(+)/Cl(-) exchange transporter ClcA (467 aa).

Topologically, residues 1–30 (MTKRERIIQSVLVKVPKDAINQFLSHGSTP) are cytoplasmic. The helical transmembrane segment at 31-67 (ISVLFLAALVGVLAGLVGTYFEIAVHFVSETRTEWLK) threads the bilayer. Topologically, residues 68 to 74 (SEIGHLL) are periplasmic. A helical transmembrane segment spans residues 75–98 (PLWLAAILISAALAFVGYFLVHRF). The short motif at 104–108 (GSGIP) is the Selectivity filter part_1 element. S105 is a chloride binding site. The segment at residues 107 to 114 (IPEIEGAM) is an intramembrane region (helical). Topologically, residues 115–121 (DNIRPVR) are cytoplasmic. A run of 2 helical transmembrane segments spans residues 122 to 139 (WWRV…ALGS) and 146 to 164 (EGPT…TDIF). The Selectivity filter part_2 signature appears at 144–148 (GREGP). The Cytoplasmic segment spans residues 165-174 (RVKDDDTRHS). 2 intramembrane regions (helical) span residues 175–187 (LLAS…LAAA) and 191–199 (PLAGIMFVV). Residues 200-212 (EEMRPQFRYSLIS) lie on the Cytoplasmic side of the membrane. Residues 213–230 (IRAVIISAVMANIVFRAI) form a helical membrane-spanning segment. The Periplasmic portion of the chain corresponds to 231 to 250 (NGQDAVITMPQYQPPELKAL). A helical transmembrane segment spans residues 251–279 (WLFLLLGGLFGVFGVLFNKLVTVAQDAFV). The Cytoplasmic portion of the chain corresponds to 280–285 (ALHKND). Residues 286–307 (RKRYLITGTCLGGIFGLLLLYV) traverse the membrane as a helical segment. Residues 308–327 (PELTGGGIHLIPDVTNGNYS) lie on the Periplasmic side of the membrane. Helical transmembrane passes span 328–347 (VSLL…ICFG) and 353–374 (GIFA…ATAK). The Selectivity filter part_3 signature appears at 353–357 (GIFAP). Chloride contacts are provided by I354 and F355. Residues 375–384 (ILLPDLPIEP) lie on the Periplasmic side of the membrane. The segment at residues 385–399 (GMFAIAGMGALFAAT) is an intramembrane region (helical). Residues 400–402 (VRA) constitute an intramembrane region (note=Loop between two helices). Positions 403 to 414 (PITGILLVIEMT) form an intramembrane region, helical. The segment at residues 415–419 (NNYYL) is an intramembrane region (note=Loop between two helices). The chain crosses the membrane as a helical span at residues 420–436 (ILPLIITSLGAVICAQI). At 437–467 (CGGKPIYSQLLHRTIKNDKLRQQDLPEQQNS) the chain is on the cytoplasmic side. Residue Y443 coordinates chloride.

This sequence belongs to the chloride channel (TC 2.A.49) family. ClcA subfamily. As to quaternary structure, homodimer.

The protein resides in the cell inner membrane. It catalyses the reaction 2 chloride(in) + H(+)(out) = 2 chloride(out) + H(+)(in). Its function is as follows. Proton-coupled chloride transporter. Functions as antiport system and exchanges two chloride ions for 1 proton. Probably acts as an electrical shunt for an outwardly-directed proton pump that is linked to amino acid decarboxylation, as part of the extreme acid resistance (XAR) response. The polypeptide is H(+)/Cl(-) exchange transporter ClcA (Vibrio vulnificus (strain CMCP6)).